The sequence spans 322 residues: UV DNA damage endonuclease (322 aa).

The protein belongs to the uve1/UvsE family.

Component in a DNA repair pathway. Removal of UV LIGHT damaged nucleotides. Recognizes pyrimidine dimers and cleave a phosphodiester bond immediately 5' to the lesion. The polypeptide is UV DNA damage endonuclease (Nostoc sp. (strain PCC 7120 / SAG 25.82 / UTEX 2576)).